The sequence spans 179 residues: Natural killer cells antigen CD94 (179 aa).

The Cytoplasmic portion of the chain corresponds to Met-1–Trp-10. A helical; Signal-anchor for type II membrane protein membrane pass occupies residues Leu-11–Leu-31. The Extracellular portion of the chain corresponds to Lys-32 to Ile-179. 2 disulfide bridges follow: Cys-58–Cys-70 and Cys-61–Cys-72. The region spanning Tyr-68–Lys-175 is the C-type lectin domain. N-linked (GlcNAc...) asparagine glycans are attached at residues Asn-83 and Asn-132. 2 disulfide bridges follow: Cys-89-Cys-174 and Cys-152-Cys-166.

As to quaternary structure, can form disulfide-bonded heterodimer with NKG2 family members KLRC1 and KLRC2. KLRD1-KLRC1 heterodimer interacts with peptide-bound MHC-E-B2M heterotrimeric complex. KLRD1 plays a prominent role in directly interacting with MHC-E. KLRD1-KLRC1 interacts with much higher affinity with peptide-bound MHC-E-B2M than KLRD1-KLRC2. Interacts with the adapter protein TYROBP/DAP12; this interaction is required for cell surface expression and cell activation. In terms of tissue distribution, natural killer cells.

The protein localises to the cell membrane. In terms of biological role, immune receptor involved in self-nonself discrimination. In complex with KLRC1 or KLRC2 on cytotoxic and regulatory lymphocyte subsets, recognizes non-classical major histocompatibility (MHC) class Ib molecule MHC-E loaded with self-peptides derived from the signal sequence of classical MHC class Ia and non-classical MHC class Ib molecules. Enables cytotoxic cells to monitor the expression of MHC class I molecules in healthy cells and to tolerate self. Primarily functions as a ligand binding subunit as it lacks the capacity to signal. KLRD1-KLRC1 acts as an immune inhibitory receptor. Key inhibitory receptor on natural killer (NK) cells that regulates their activation and effector functions. Dominantly counteracts T cell receptor signaling on a subset of memory/effector CD8-positive T cells as part of an antigen-driven response to avoid autoimmunity. On intraepithelial CD8-positive gamma-delta regulatory T cells triggers TGFB1 secretion, which in turn limits the cytotoxic programming of intraepithelial CD8-positive alpha-beta T cells, distinguishing harmless from pathogenic antigens. In MHC-E-rich tumor microenvironment, acts as an immune inhibitory checkpoint and may contribute to progressive loss of effector functions of NK cells and tumor-specific T cells, a state known as cell exhaustion. Upon MHC-E-peptide binding, transmits intracellular signals through KLRC1 immunoreceptor tyrosine-based inhibition motifs (ITIMs) by recruiting INPP5D/SHIP-1 and INPPL1/SHIP-2 tyrosine phosphatases to ITIMs, and ultimately opposing signals transmitted by activating receptors through dephosphorylation of proximal signaling molecules. Functionally, KLRD1-KLRC2 acts as an immune activating receptor. On cytotoxic lymphocyte subsets recognizes MHC-E loaded with signal sequence-derived peptides from non-classical MHC class Ib MHC-G molecules, likely playing a role in the generation and effector functions of adaptive NK cells and in maternal-fetal tolerance during pregnancy. Regulates the effector functions of terminally differentiated cytotoxic lymphocyte subsets, and in particular may play a role in adaptive NK cell response to viral infection. Upon MHC-E-peptide binding, transmits intracellular signals via the adapter protein TYROBP/DAP12, triggering the phosphorylation of proximal signaling molecules and cell activation. This is Natural killer cells antigen CD94 (KLRD1) from Pongo pygmaeus (Bornean orangutan).